Consider the following 365-residue polypeptide: NAD(P)H-quinone oxidoreductase subunit 1, chloroplastic (365 aa).

6 helical membrane-spanning segments follow: residues 30–50, 104–124, 129–149, 253–273, 302–322, and 338–358; these read LVPI…IVWL, IAVI…HFVL, IGVF…LMSG, FGLF…FVAV, VFGT…FLFI, and LLNL…LLTT.

It belongs to the complex I subunit 1 family. In terms of assembly, NDH is composed of at least 16 different subunits, 5 of which are encoded in the nucleus.

Its subcellular location is the plastid. It is found in the chloroplast thylakoid membrane. The catalysed reaction is a plastoquinone + NADH + (n+1) H(+)(in) = a plastoquinol + NAD(+) + n H(+)(out). It catalyses the reaction a plastoquinone + NADPH + (n+1) H(+)(in) = a plastoquinol + NADP(+) + n H(+)(out). In terms of biological role, NDH shuttles electrons from NAD(P)H:plastoquinone, via FMN and iron-sulfur (Fe-S) centers, to quinones in the photosynthetic chain and possibly in a chloroplast respiratory chain. The immediate electron acceptor for the enzyme in this species is believed to be plastoquinone. Couples the redox reaction to proton translocation, and thus conserves the redox energy in a proton gradient. This chain is NAD(P)H-quinone oxidoreductase subunit 1, chloroplastic, found in Populus trichocarpa (Western balsam poplar).